A 624-amino-acid chain; its full sequence is Alpha-mannosidase I MNS4 (624 aa).

Residues 1-7 (MDSNFKW) are Cytoplasmic-facing. The helical; Signal-anchor for type II membrane protein transmembrane segment at 8–28 (LLFAILISLTFSGFVLHHGVL) threads the bilayer. Topologically, residues 29–624 (AESVKPDEAK…ETDDQRSYSS (596 aa)) are lumenal. N115 carries an N-linked (GlcNAc...) asparagine glycan. Residue E122 is the Proton donor of the active site. D262 is a catalytic residue. E355 acts as the Proton donor in catalysis. The active site involves E376. Residue T466 participates in Ca(2+) binding. N494 carries N-linked (GlcNAc...) asparagine glycosylation. Residues 574 to 624 (QTVEKRPQEEEGFTSQSEPIMTISGGSSNDQTGQELTLLESETDDQRSYSS) are disordered. Polar residues predominate over residues 586–608 (FTSQSEPIMTISGGSSNDQTGQE).

This sequence belongs to the glycosyl hydrolase 47 family. It depends on Ca(2+) as a cofactor.

The protein localises to the endoplasmic reticulum membrane. The protein operates within protein modification; protein glycosylation. Can convert Man(9)GlcNAc(2) and Man(8)GlcNAc(2) into N-glycans with a terminal alpha-1,6-linked Man residue in the C-branch. Functions in the formation of unique N-glycan structures that are specifically recognized by components of the endoplasmic reticulum-associated degradation (ERAD) machinery, which leads to the degradation of misfolded glycoproteins. Most likely generates N-glycan signal on misfolded glycoproteins that is subsequently recognized by OS9. Required for ERAD of the heavily glycosylated and misfolded BRI1 variants BRI1-5 and BRI1-9. Does not seem to play role in N-glycan processing of correctly folded proteins destined for secretion. This is Alpha-mannosidase I MNS4 (MNS4) from Arabidopsis thaliana (Mouse-ear cress).